Consider the following 332-residue polypeptide: Cytochrome c oxidase subunit 2 (332 aa).

A signal peptide spans 1–20 (MKIPGSVITLLIGVVITVVS). The next 2 helical transmembrane spans lie at 48–68 (MMTIATGLFLLVEGVLVYCLI) and 87–107 (VPLEILWTAIPTVIVFTLAVY). H214, C249, C253, and H257 together coordinate Cu cation.

The protein belongs to the cytochrome c oxidase subunit 2 family. It depends on Cu cation as a cofactor.

It localises to the cell membrane. It carries out the reaction 4 Fe(II)-[cytochrome c] + O2 + 8 H(+)(in) = 4 Fe(III)-[cytochrome c] + 2 H2O + 4 H(+)(out). In terms of biological role, subunits I and II form the functional core of the enzyme complex. Electrons originating in cytochrome c are transferred via heme a and Cu(A) to the binuclear center formed by heme a3 and Cu(B). The sequence is that of Cytochrome c oxidase subunit 2 (ctaC) from Synechocystis sp. (strain ATCC 27184 / PCC 6803 / Kazusa).